The chain runs to 206 residues: 3-demethoxyubiquinol 3-hydroxylase (206 aa).

The Fe cation site is built by Glu-55, Glu-85, His-88, Glu-137, Glu-169, and His-172.

The protein belongs to the COQ7 family. It depends on Fe cation as a cofactor.

Its subcellular location is the cell membrane. The catalysed reaction is a 5-methoxy-2-methyl-3-(all-trans-polyprenyl)benzene-1,4-diol + AH2 + O2 = a 3-demethylubiquinol + A + H2O. It participates in cofactor biosynthesis; ubiquinone biosynthesis. In terms of biological role, catalyzes the hydroxylation of 2-nonaprenyl-3-methyl-6-methoxy-1,4-benzoquinol during ubiquinone biosynthesis. In Aromatoleum aromaticum (strain DSM 19018 / LMG 30748 / EbN1) (Azoarcus sp. (strain EbN1)), this protein is 3-demethoxyubiquinol 3-hydroxylase.